The sequence spans 157 residues: Small ribosomal subunit protein uS7 (157 aa).

Belongs to the universal ribosomal protein uS7 family. As to quaternary structure, part of the 30S ribosomal subunit. Contacts proteins S9 and S11.

Functionally, one of the primary rRNA binding proteins, it binds directly to 16S rRNA where it nucleates assembly of the head domain of the 30S subunit. Is located at the subunit interface close to the decoding center, probably blocks exit of the E-site tRNA. The polypeptide is Small ribosomal subunit protein uS7 (Chloroflexus aggregans (strain MD-66 / DSM 9485)).